The chain runs to 1021 residues: tRNA wybutosine-synthesizing protein 4 (1021 aa).

Residues Arg-68, Asp-122, 171-172, and Glu-198 each bind S-adenosyl-L-methionine; that span reads DL. The JmjC domain maps to 826–980; it reads PTEAPANLAE…STGRDVYGNR (155 aa).

The protein belongs to the methyltransferase superfamily. LCMT family.

The enzyme catalyses 7-[(3S)-3-amino-3-carboxypropyl]wyosine(37) in tRNA(Phe) + S-adenosyl-L-methionine = 7-[(3S)-(3-amino-3-methoxycarbonyl)propyl]wyosine(37) in tRNA(Phe) + S-adenosyl-L-homocysteine. The catalysed reaction is 7-[(3S)-(3-amino-3-methoxycarbonyl)propyl]wyosine(37) in tRNA(Phe) + S-adenosyl-L-methionine + CO2 = wybutosine(37) in tRNA(Phe) + S-adenosyl-L-homocysteine + 2 H(+). It functions in the pathway tRNA modification; wybutosine-tRNA(Phe) biosynthesis. Probable S-adenosyl-L-methionine-dependent methyltransferase that acts as a component of the wybutosine biosynthesis pathway. Wybutosine is a hyper modified guanosine with a tricyclic base found at the 3'-position adjacent to the anticodon of eukaryotic phenylalanine tRNA. May methylate the carboxyl group of leucine residues to form alpha-leucine ester residues. In Gibberella zeae (strain ATCC MYA-4620 / CBS 123657 / FGSC 9075 / NRRL 31084 / PH-1) (Wheat head blight fungus), this protein is tRNA wybutosine-synthesizing protein 4 (PPM2).